The chain runs to 225 residues: MQENSPLLQLQNVGYLAGDAKILNNINFSLRAGEFKLITGPSGCGKSTLLKIVASLISPTSGTLLFEGEDVSTLKPEIYRQQVSYCAQTPTLFGDTVYDNLIFPWQIRNRQPDPAIFLDFLERFALPDSILTKNIAELSGGEKQRISLIRNLQFMPKVLLLDEITSALDESNKHNVNEMIHRYVREQNIAVLWVTHDKDEINHADKVITLQPHAGEMQEARYELA.

One can recognise an ABC transporter domain in the interval Leu8–Ala225. Residue Gly40–Ser47 coordinates ATP.

Belongs to the ABC transporter superfamily. The complex is composed of two ATP-binding proteins (FetA) and two transmembrane proteins (FetB).

The protein resides in the cell inner membrane. Its function is as follows. Part of the ABC transporter complex FetAB, which is probably involved in iron export and enhances resistance to H(2)O(2)-mediated oxidative stress. Probably responsible for energy coupling to the transport system. The protein is Probable iron export ATP-binding protein FetA (fetA) of Escherichia coli (strain K12).